The following is a 109-amino-acid chain: Ferredoxin (109 aa).

4Fe-4S ferredoxin-type domains lie at 2-30 and 31-60; these read TYVVTDECVKCKYTDCVEVCPVDCFYEGE and FMLVINPDECIDCGVCVPDCPIDAIKPESP. C9 and C17 together coordinate [3Fe-4S] cluster. C21, C40, C43, and C46 together coordinate [4Fe-4S] cluster. Position 50 (C50) interacts with [3Fe-4S] cluster.

The cofactor is [4Fe-4S] cluster. It depends on [3Fe-4S] cluster as a cofactor.

Functionally, ferredoxins are iron-sulfur proteins that transfer electrons in a wide variety of metabolic reactions. The chain is Ferredoxin (fdxA) from Rickettsia prowazekii (strain Madrid E).